A 205-amino-acid polypeptide reads, in one-letter code: MSALTDWQTAPALLALAALIGYLLGSIPFGLILTRMAGLGDVRKIGSGNIGATNVLRTGNKKLAAATLLLDALKGTAAVLVANALWGYEASLVAGFFAFLGHLFPVWLGFKGGKGVAVYIGVLLGAAPLMMLAFALIWLATAFITRYSSLSALLAMLIIPVALWVLGPEKTAMLVTLLSVISWWKHRENIRRLMAGTESRIGQKG.

The next 5 helical transmembrane spans lie at 13–33 (LLALAALIGYLLGSIPFGLIL), 68–88 (LLLDALKGTAAVLVANALWGY), 90–110 (ASLVAGFFAFLGHLFPVWLGF), 120–140 (IGVLLGAAPLMMLAFALIWLA), and 147–167 (YSSLSALLAMLIIPVALWVLG).

Belongs to the PlsY family. As to quaternary structure, probably interacts with PlsX.

The protein localises to the cell inner membrane. The catalysed reaction is an acyl phosphate + sn-glycerol 3-phosphate = a 1-acyl-sn-glycero-3-phosphate + phosphate. Its pathway is lipid metabolism; phospholipid metabolism. In terms of biological role, catalyzes the transfer of an acyl group from acyl-phosphate (acyl-PO(4)) to glycerol-3-phosphate (G3P) to form lysophosphatidic acid (LPA). This enzyme utilizes acyl-phosphate as fatty acyl donor, but not acyl-CoA or acyl-ACP. The protein is Glycerol-3-phosphate acyltransferase of Agrobacterium fabrum (strain C58 / ATCC 33970) (Agrobacterium tumefaciens (strain C58)).